A 498-amino-acid chain; its full sequence is ATP synthase subunit beta, chloroplastic (498 aa).

172 to 179 (GGAGVGKT) provides a ligand contact to ATP.

Belongs to the ATPase alpha/beta chains family. F-type ATPases have 2 components, CF(1) - the catalytic core - and CF(0) - the membrane proton channel. CF(1) has five subunits: alpha(3), beta(3), gamma(1), delta(1), epsilon(1). CF(0) has four main subunits: a(1), b(1), b'(1) and c(9-12).

It localises to the plastid. The protein localises to the chloroplast thylakoid membrane. It catalyses the reaction ATP + H2O + 4 H(+)(in) = ADP + phosphate + 5 H(+)(out). Functionally, produces ATP from ADP in the presence of a proton gradient across the membrane. The catalytic sites are hosted primarily by the beta subunits. The polypeptide is ATP synthase subunit beta, chloroplastic (Gossypium hirsutum (Upland cotton)).